The sequence spans 519 residues: Glutamate--cysteine ligase (519 aa).

Belongs to the glutamate--cysteine ligase type 1 family. Type 1 subfamily.

It catalyses the reaction L-cysteine + L-glutamate + ATP = gamma-L-glutamyl-L-cysteine + ADP + phosphate + H(+). The protein operates within sulfur metabolism; glutathione biosynthesis; glutathione from L-cysteine and L-glutamate: step 1/2. In Yersinia pseudotuberculosis serotype I (strain IP32953), this protein is Glutamate--cysteine ligase.